A 794-amino-acid polypeptide reads, in one-letter code: E3 ubiquitin-protein ligase wwp-1 (794 aa).

Residues 1–16 (MARNEPSSQQPSSSGS) show a composition bias toward low complexity. 2 disordered regions span residues 1-31 (MARNEPSSQQPSSSGSNGTPAQQNGSAKPSK) and 155-198 (RSAG…AAPT). In terms of domain architecture, C2 spans 10–124 (QPSSSGSNGT…TRNENGEFKN (115 aa)). The span at 17-27 (NGTPAQQNGSA) shows a compositional bias: polar residues. Over residues 161–186 (AETAASASSEASTSNGVATSSSARRP) the composition is skewed to low complexity. 4 WW domains span residues 219–252 (EQLPDGWEMRFDQYGRKYYVDHTTKSTTWERPST), 253–286 (QPLPQGWEMRRDPRGRVYYVDHNTRTTTWQRPTA), 324–358 (GPLPEGWEKRQDPNTSRMYFVNHVNRTTQWEDPRT), and 366–399 (QPLPDGWEMRFTEQGVPFFIDHQSKTTTYNDPRT). The 335-residue stretch at 460–794 (NAVDLRRRLY…IEMTEGFGNE (335 aa)) folds into the HECT domain. The active-site Glycyl thioester intermediate is cysteine 762.

As to quaternary structure, interacts (via WW domains) with Kruppel-like factor klf-1. Interacts with ubiquitin-conjugating enzyme E2 ubc-18. In terms of tissue distribution, expressed in neurons localized in the head and tail of adults.

The enzyme catalyses S-ubiquitinyl-[E2 ubiquitin-conjugating enzyme]-L-cysteine + [acceptor protein]-L-lysine = [E2 ubiquitin-conjugating enzyme]-L-cysteine + N(6)-ubiquitinyl-[acceptor protein]-L-lysine.. The protein operates within protein modification; protein ubiquitination. Functionally, E3 ubiquitin-protein ligase which accepts ubiquitin from an E2 ubiquitin-conjugating enzyme in the form of a thioester and then directly transfers the ubiquitin to targeted substrates. Ubiquitinates klf-1. Required for diet restriction-mediated lifespan extension, acting in concert with Kruppel-like factor klf-1 in the intestine to perhaps modulate genes involved in lipid metabolism. Probably acting downstream of the Insulin/IGF-1-like signaling (IIS) mediated pathway, plays a role in the immune response to infection by the Gram-negative bacterium P.aeruginosa, at least partly in response to bacterial pore-forming toxins. This chain is E3 ubiquitin-protein ligase wwp-1, found in Caenorhabditis elegans.